Here is a 660-residue protein sequence, read N- to C-terminus: Methionine--tRNA ligase (660 aa).

A 'HIGH' region motif is present at residues 11 to 21 (PYANGPCHLGH). C143, C146, C155, and C158 together coordinate Zn(2+). The 'KMSKS' region signature appears at 325–329 (KMSTS). Residue T328 coordinates ATP. One can recognise a tRNA-binding domain in the interval 563–660 (DFDKVVIKIG…DECEVGERIQ (98 aa)).

This sequence belongs to the class-I aminoacyl-tRNA synthetase family. MetG type 1 subfamily. In terms of assembly, homodimer. Requires Zn(2+) as cofactor.

It localises to the cytoplasm. The enzyme catalyses tRNA(Met) + L-methionine + ATP = L-methionyl-tRNA(Met) + AMP + diphosphate. In terms of biological role, is required not only for elongation of protein synthesis but also for the initiation of all mRNA translation through initiator tRNA(fMet) aminoacylation. The protein is Methionine--tRNA ligase of Methanobrevibacter smithii (strain ATCC 35061 / DSM 861 / OCM 144 / PS).